The primary structure comprises 197 residues: Holliday junction branch migration complex subunit RuvA (197 aa).

A domain I region spans residues 1-64 (MYDYIKGIYK…DDSINLYGFF (64 aa)). The segment at 65 to 143 (TEEERDMFNL…NDDIISDIDD (79 aa)) is domain II. The interval 144–154 (LDSISNFQLHS) is flexible linker. Positions 154-197 (SAEALEALMSLGYSQKESEKALKNVDKENSLEDIIKACLKYLMG) are domain III.

It belongs to the RuvA family. As to quaternary structure, homotetramer. Forms an RuvA(8)-RuvB(12)-Holliday junction (HJ) complex. HJ DNA is sandwiched between 2 RuvA tetramers; dsDNA enters through RuvA and exits via RuvB. An RuvB hexamer assembles on each DNA strand where it exits the tetramer. Each RuvB hexamer is contacted by two RuvA subunits (via domain III) on 2 adjacent RuvB subunits; this complex drives branch migration. In the full resolvosome a probable DNA-RuvA(4)-RuvB(12)-RuvC(2) complex forms which resolves the HJ.

The protein resides in the cytoplasm. The RuvA-RuvB-RuvC complex processes Holliday junction (HJ) DNA during genetic recombination and DNA repair, while the RuvA-RuvB complex plays an important role in the rescue of blocked DNA replication forks via replication fork reversal (RFR). RuvA specifically binds to HJ cruciform DNA, conferring on it an open structure. The RuvB hexamer acts as an ATP-dependent pump, pulling dsDNA into and through the RuvAB complex. HJ branch migration allows RuvC to scan DNA until it finds its consensus sequence, where it cleaves and resolves the cruciform DNA. The sequence is that of Holliday junction branch migration complex subunit RuvA from Clostridium tetani (strain Massachusetts / E88).